A 540-amino-acid chain; its full sequence is Phosphoenolpyruvate carboxykinase (ATP) (540 aa).

Residue Arg65 participates in substrate binding. Lys87 is subject to N6-acetyllysine. The substrate site is built by Tyr207 and Lys213. ATP contacts are provided by residues Lys213, His232, and 248 to 256 (GLSGTGKTT). Mn(2+) is bound by residues Lys213 and His232. Asp269 is a binding site for Mn(2+). ATP contacts are provided by residues Glu297, Arg333, 449–450 (RI), and Thr455. Residue Arg333 coordinates substrate. At Lys523 the chain carries N6-acetyllysine.

The protein belongs to the phosphoenolpyruvate carboxykinase (ATP) family. In terms of assembly, monomer. The cofactor is Mn(2+).

The protein localises to the cytoplasm. The enzyme catalyses oxaloacetate + ATP = phosphoenolpyruvate + ADP + CO2. It functions in the pathway carbohydrate biosynthesis; gluconeogenesis. Involved in the gluconeogenesis. Catalyzes the conversion of oxaloacetate (OAA) to phosphoenolpyruvate (PEP) through direct phosphoryl transfer between the nucleoside triphosphate and OAA. The protein is Phosphoenolpyruvate carboxykinase (ATP) of Shigella flexneri serotype 5b (strain 8401).